Consider the following 285-residue polypeptide: Release factor glutamine methyltransferase (285 aa).

S-adenosyl-L-methionine contacts are provided by residues 124–128, Asp-147, and Asn-190; that span reads GTGSG. 190–193 is a binding site for substrate; it reads NPPY.

This sequence belongs to the protein N5-glutamine methyltransferase family. PrmC subfamily.

It carries out the reaction L-glutaminyl-[peptide chain release factor] + S-adenosyl-L-methionine = N(5)-methyl-L-glutaminyl-[peptide chain release factor] + S-adenosyl-L-homocysteine + H(+). In terms of biological role, methylates the class 1 translation termination release factors RF1/PrfA and RF2/PrfB on the glutamine residue of the universally conserved GGQ motif. This is Release factor glutamine methyltransferase from Flavobacterium psychrophilum (strain ATCC 49511 / DSM 21280 / CIP 103535 / JIP02/86).